The following is a 950-amino-acid chain: Leucine--tRNA ligase (950 aa).

The 'HIGH' region motif lies at 72–83; sequence PYPSGEGLHVGH. Residues 722–726 carry the 'KMSKS' region motif; the sequence is KIGKS. ATP is bound at residue K725.

The protein belongs to the class-I aminoacyl-tRNA synthetase family.

It is found in the cytoplasm. The catalysed reaction is tRNA(Leu) + L-leucine + ATP = L-leucyl-tRNA(Leu) + AMP + diphosphate. The chain is Leucine--tRNA ligase from Mycobacterium sp. (strain KMS).